The sequence spans 291 residues: Protease HtpX (291 aa).

2 consecutive transmembrane segments (helical) span residues 4–24 and 37–57; these read VLLF…VLSV and GGLL…SLLM. His-143 contacts Zn(2+). Glu-144 is an active-site residue. A Zn(2+)-binding site is contributed by His-147. The next 2 membrane-spanning stretches (helical) occupy residues 158–178 and 198–218; these read LIQG…AGIV and FAIS…IVMW. Glu-224 contributes to the Zn(2+) binding site.

Belongs to the peptidase M48B family. Zn(2+) is required as a cofactor.

The protein resides in the cell inner membrane. The polypeptide is Protease HtpX (Tolumonas auensis (strain DSM 9187 / NBRC 110442 / TA 4)).